We begin with the raw amino-acid sequence, 273 residues long: Dermonecrotic toxin LapSicTox-alphaIB1aii (273 aa).

The active site involves histidine 5. Glutamate 25 and aspartate 27 together coordinate Mg(2+). Catalysis depends on histidine 41, which acts as the Nucleophile. Disulfide bonds link cysteine 45-cysteine 51 and cysteine 47-cysteine 190. Aspartate 85 provides a ligand contact to Mg(2+). N-linked (GlcNAc...) asparagine glycosylation occurs at asparagine 250.

Belongs to the arthropod phospholipase D family. Class II subfamily. Mg(2+) serves as cofactor. As to expression, expressed by the venom gland.

Its subcellular location is the secreted. The enzyme catalyses an N-(acyl)-sphingosylphosphocholine = an N-(acyl)-sphingosyl-1,3-cyclic phosphate + choline. The catalysed reaction is an N-(acyl)-sphingosylphosphoethanolamine = an N-(acyl)-sphingosyl-1,3-cyclic phosphate + ethanolamine. It catalyses the reaction a 1-acyl-sn-glycero-3-phosphocholine = a 1-acyl-sn-glycero-2,3-cyclic phosphate + choline. It carries out the reaction a 1-acyl-sn-glycero-3-phosphoethanolamine = a 1-acyl-sn-glycero-2,3-cyclic phosphate + ethanolamine. Dermonecrotic toxins cleave the phosphodiester linkage between the phosphate and headgroup of certain phospholipids (sphingolipid and lysolipid substrates), forming an alcohol (often choline) and a cyclic phosphate. This toxin acts on sphingomyelin (SM). It may also act on ceramide phosphoethanolamine (CPE), lysophosphatidylcholine (LPC) and lysophosphatidylethanolamine (LPE), but not on lysophosphatidylserine (LPS), and lysophosphatidylglycerol (LPG). It acts by transphosphatidylation, releasing exclusively cyclic phosphate products as second products. Induces dermonecrosis, hemolysis, increased vascular permeability, edema, inflammatory response, and platelet aggregation. This Loxosceles apachea (Apache recluse spider) protein is Dermonecrotic toxin LapSicTox-alphaIB1aii.